The chain runs to 301 residues: MDSARALIARGWGVSLVSRCLRVSRAQLHVILRRTDDWMDGRRSRHTDDTDVLLRIHHVIGELPTYGYRRVWALLRRQAELDGMPAINAKRVYRIMRQNALLLERKPAVPPSKRAHTGRVAVKESNQRWCSDGFEFCCDNGERLRVTFALDCCDREALHWAVTTGGFNSETVQDVMLGAVERRFGNDLPSSPVEWLTDNGSCYRANETRQFARMLGLEPKNTAVRSPESNGIAESFVKTIKRDYISIMPKPDGLTAAKNLAEAFEHYNEWHPHSALGYRSPREYLRQRACNGLSDNRCLEI.

Residues 106–289 (KPAVPPSKRA…SPREYLRQRA (184 aa)) enclose the Integrase catalytic domain.

Involved in the transposition of the insertion sequence IS2. The polypeptide is Transposase InsD for insertion element IS2D (insD2) (Escherichia coli (strain K12)).